Reading from the N-terminus, the 231-residue chain is Phosphoglycolate phosphatase (231 aa).

Aspartate 9 functions as the Nucleophile in the catalytic mechanism. Aspartate 9 and aspartate 11 together coordinate Mg(2+). Lysine 154 is a binding site for substrate. Mg(2+)-binding residues include aspartate 177 and aspartate 181.

This sequence belongs to the archaeal SPP-like hydrolase family. Mg(2+) is required as a cofactor.

It carries out the reaction 2-phosphoglycolate + H2O = glycolate + phosphate. Its function is as follows. Catalyzes the dephosphorylation of 2-phosphoglycolate. The polypeptide is Phosphoglycolate phosphatase (Pyrococcus furiosus (strain ATCC 43587 / DSM 3638 / JCM 8422 / Vc1)).